The primary structure comprises 280 residues: Ribosomal RNA small subunit methyltransferase A (280 aa).

Positions 30, 32, 57, 78, 108, and 125 each coordinate S-adenosyl-L-methionine.

Belongs to the class I-like SAM-binding methyltransferase superfamily. rRNA adenine N(6)-methyltransferase family. RsmA subfamily.

Its subcellular location is the cytoplasm. It carries out the reaction adenosine(1518)/adenosine(1519) in 16S rRNA + 4 S-adenosyl-L-methionine = N(6)-dimethyladenosine(1518)/N(6)-dimethyladenosine(1519) in 16S rRNA + 4 S-adenosyl-L-homocysteine + 4 H(+). Functionally, specifically dimethylates two adjacent adenosines (A1518 and A1519) in the loop of a conserved hairpin near the 3'-end of 16S rRNA in the 30S particle. May play a critical role in biogenesis of 30S subunits. This chain is Ribosomal RNA small subunit methyltransferase A, found in Leifsonia xyli subsp. xyli (strain CTCB07).